Consider the following 550-residue polypeptide: Arginine--tRNA ligase (550 aa).

A 'HIGH' region motif is present at residues 130-140 (ANPTGPIHLGG).

This sequence belongs to the class-I aminoacyl-tRNA synthetase family. In terms of assembly, monomer.

The protein localises to the cytoplasm. The enzyme catalyses tRNA(Arg) + L-arginine + ATP = L-arginyl-tRNA(Arg) + AMP + diphosphate. The protein is Arginine--tRNA ligase of Corynebacterium glutamicum (strain R).